The primary structure comprises 1451 residues: Fanconi anemia group D2 protein (1451 aa).

The segment at 1–37 (MVSKRRLSKSEDKESLTEDASKTRKQPLSKKTKKSHI) is disordered. The segment at 1 to 291 (MVSKRRLSKS…IKFILHSVTA (291 aa)) is interaction with FANCE. Ser8 is modified (phosphoserine). Residues 8–22 (SKSEDKESLTEDASK) are compositionally biased toward basic and acidic residues. Residues 23-36 (TRKQPLSKKTKKSH) show a composition bias toward basic residues. Ser222 carries the post-translational modification Phosphoserine; by ATM. Positions 248-359 (VLSSLRLDPN…IKSAIRYEKT (112 aa)) are interaction with BRCA2. Lys561 is covalently cross-linked (Glycyl lysine isopeptide (Lys-Gly) (interchain with G-Cter in ubiquitin)). Residues Ser592, Ser594, and Ser717 each carry the phosphoserine modification. The interval 868-906 (IERKQKTDGSKTSSSDTLSEEKNSECDPTPSHRGQLNKE) is disordered. A Phosphoserine modification is found at Ser1257. The interval 1396–1451 (GEEIKSQNSQESTADESEDDMSSQASKSKATEDGEEDEVSAGEKEQDSDESYDDSD) is disordered. Phosphoserine; by ATM occurs at positions 1401 and 1404. Ser1412 and Ser1423 each carry phosphoserine. Thr1426 carries the post-translational modification Phosphothreonine. Residues 1428 to 1451 (DGEEDEVSAGEKEQDSDESYDDSD) are compositionally biased toward acidic residues. Ser1435 carries the post-translational modification Phosphoserine.

It belongs to the Fanconi anemia protein FANCD2 family. Homodimer; cannot be ubiquitinated and does not bind DNA. Part of a FANCI-FANCD2 heterodimeric complex that binds and scans dsDNA for DNA damage. Interacts directly with FANCE and FANCI. Interacts with USP1 and MEN1. The ubiquitinated form specifically interacts with BRCA1 and BLM. Both the nonubiquitinated and the monoubiquitinated forms interact with BRCA2; this interaction is mediated by phosphorylated FANCG and the complex also includes XCCR3. The ubiquitinated form specifically interacts with MTMR15/FAN1 (via UBZ-type zinc finger), leading to recruit MTMR15/FAN1 to sites of DNA damage. Interacts with DCLRE1B/Apollo. Interacts with POLN. Interacts with UHRF1 and UHRF2; these interactions promote FANCD2 activation. Post-translationally, monoubiquitinated on Lys-561 during S phase and upon genotoxic stress by FANCL in complex with E2 ligases UBE2T or UBE2W (isoform 1 and isoform 2). Deubiquitinated by USP1 as cells enter G2/M, or once DNA repair is completed. Monoubiquitination requires the joint intervention of the FANC core complex, including FANCA, FANCB, FANCC, FANCE, FANCF, FANCG, and FANCM, and proteins involved in cell cycle checkpoints and DNA repair, including RPA1, ATR, CHEK1 and BRCA1, and is mediated by FANCL/PHF9. Monoubiquitination prevents DNA release from the FANCI-FANCD2 complex. FANCD2 is only ubiquitinated in the FANCI-FANCD2 complex and the monoubiquitination of FANCD2 is promoted by phosphorylation of FANCI. Ubiquitination is required for binding to chromatin, interaction with BRCA1, BRCA2 and MTMR15/FAN1, DNA repair, and normal cell cycle progression, but not for phosphorylation on Ser-222 or interaction with MEN1. Phosphorylated in response to various genotoxic stresses by ATM and/or ATR. Upon ionizing radiation, phosphorylated by ATM on Ser-222 and Ser-1404. Phosphorylation on Ser-222 is required for S-phase checkpoint activation, but not for ubiquitination, foci formation, or DNA repair. In contrast, phosphorylation by ATR on other sites may be required for ubiquitination and foci formation. As to expression, highly expressed in germinal center cells of the spleen, tonsil, and reactive lymph nodes, and in the proliferating basal layer of squamous epithelium of tonsil, esophagus, oropharynx, larynx and cervix. Expressed in cytotrophoblastic cells of the placenta and exocrine cells of the pancreas (at protein level). Highly expressed in testis, where expression is restricted to maturing spermatocytes.

Its subcellular location is the nucleus. In terms of biological role, required for maintenance of chromosomal stability. Promotes accurate and efficient pairing of homologs during meiosis. Involved in the repair of DNA double-strand breaks, both by homologous recombination and single-strand annealing. The FANCI-FANCD2 complex binds and scans double-stranded DNA (dsDNA) for DNA damage; this complex stalls at DNA junctions between double-stranded DNA and single-stranded DNA. May participate in S phase and G2 phase checkpoint activation upon DNA damage. Plays a role in preventing breakage and loss of missegregating chromatin at the end of cell division, particularly after replication stress. Required for the targeting, or stabilization, of BLM to non-centromeric abnormal structures induced by replicative stress. Promotes BRCA2/FANCD1 loading onto damaged chromatin. May also be involved in B-cell immunoglobulin isotype switching. The chain is Fanconi anemia group D2 protein (FANCD2) from Homo sapiens (Human).